A 910-amino-acid chain; its full sequence is Chitin synthase A (910 aa).

A disordered region spans residues 56 to 156 (NYHDDYDPRP…EPAPTPTPAP (101 aa)). Basic and acidic residues-rich tracts occupy residues 57–84 (YHDDYDPRPGGRRHDSDYSLDPNAHHDA) and 130–148 (DPHDPDRDPHPDDPFHDEP). Transmembrane regions (helical) follow at residues 366–386 (WFFQAFGQVLDPNICVLIDAG), 448–468 (SAFGFITVLPGAFSAYRYVAL), 583–603 (VYQTISMLFAWFALGNFFLVF), 620–640 (VLFIVFEWLYIAVLITCFILS), 655–675 (MVYFWGVIMAYLMFASIFITV), 701–721 (TLIISLLSTYVMWLVVSIIFL), 730–750 (FIQYLLMTPTYINILNVYAFC), 828–848 (GVVLFWMFCNLALTALVLQAG), and 876–896 (LYSVAGLAAFRFIGAMWFLVV).

The protein belongs to the chitin synthase family. Class I subfamily.

It localises to the cell membrane. It carries out the reaction [(1-&gt;4)-N-acetyl-beta-D-glucosaminyl](n) + UDP-N-acetyl-alpha-D-glucosamine = [(1-&gt;4)-N-acetyl-beta-D-glucosaminyl](n+1) + UDP + H(+). Functionally, polymerizes chitin, a structural polymer of the cell wall and septum, by transferring the sugar moiety of UDP-GlcNAc to the non-reducing end of the growing chitin polymer. This chain is Chitin synthase A (CHSA), found in Ampelomyces quisqualis (Powdery mildew agent).